The chain runs to 437 residues: CCA-adding enzyme (437 aa).

ATP is bound by residues S50 and K53. CTP is bound by residues S50 and K53. Mg(2+) is bound by residues D61, D63, and D112. Residues H135, K155, and Y164 each contribute to the ATP site. CTP-binding residues include H135, K155, and Y164.

It belongs to the tRNA nucleotidyltransferase/poly(A) polymerase family. Archaeal CCA-adding enzyme subfamily. As to quaternary structure, homodimer. Mg(2+) is required as a cofactor.

The enzyme catalyses a tRNA precursor + 2 CTP + ATP = a tRNA with a 3' CCA end + 3 diphosphate. The catalysed reaction is a tRNA with a 3' CCA end + 2 CTP + ATP = a tRNA with a 3' CCACCA end + 3 diphosphate. In terms of biological role, catalyzes the addition and repair of the essential 3'-terminal CCA sequence in tRNAs without using a nucleic acid template. Adds these three nucleotides in the order of C, C, and A to the tRNA nucleotide-73, using CTP and ATP as substrates and producing inorganic pyrophosphate. tRNA 3'-terminal CCA addition is required both for tRNA processing and repair. Also involved in tRNA surveillance by mediating tandem CCA addition to generate a CCACCA at the 3' terminus of unstable tRNAs. While stable tRNAs receive only 3'-terminal CCA, unstable tRNAs are marked with CCACCA and rapidly degraded. The protein is CCA-adding enzyme of Thermoplasma volcanium (strain ATCC 51530 / DSM 4299 / JCM 9571 / NBRC 15438 / GSS1).